A 473-amino-acid chain; its full sequence is ATP synthase subunit beta 2 (473 aa).

Residue 158 to 165 (GGAGVGKT) coordinates ATP.

The protein belongs to the ATPase alpha/beta chains family. F-type ATPases have 2 components, CF(1) - the catalytic core - and CF(0) - the membrane proton channel. CF(1) has five subunits: alpha(3), beta(3), gamma(1), delta(1), epsilon(1). CF(0) has three main subunits: a(1), b(2) and c(9-12). The alpha and beta chains form an alternating ring which encloses part of the gamma chain. CF(1) is attached to CF(0) by a central stalk formed by the gamma and epsilon chains, while a peripheral stalk is formed by the delta and b chains.

It localises to the cell membrane. The enzyme catalyses ATP + H2O + 4 H(+)(in) = ADP + phosphate + 5 H(+)(out). Its function is as follows. Produces ATP from ADP in the presence of a proton gradient across the membrane. The catalytic sites are hosted primarily by the beta subunits. The sequence is that of ATP synthase subunit beta 2 from Listeria welshimeri serovar 6b (strain ATCC 35897 / DSM 20650 / CCUG 15529 / CIP 8149 / NCTC 11857 / SLCC 5334 / V8).